Here is a 154-residue protein sequence, read N- to C-terminus: 3-hydroxyacyl-[acyl-carrier-protein] dehydratase FabZ (154 aa).

Histidine 54 is an active-site residue.

The protein belongs to the thioester dehydratase family. FabZ subfamily.

The protein resides in the cytoplasm. It catalyses the reaction a (3R)-hydroxyacyl-[ACP] = a (2E)-enoyl-[ACP] + H2O. In terms of biological role, involved in unsaturated fatty acids biosynthesis. Catalyzes the dehydration of short chain beta-hydroxyacyl-ACPs and long chain saturated and unsaturated beta-hydroxyacyl-ACPs. In Chlamydia caviae (strain ATCC VR-813 / DSM 19441 / 03DC25 / GPIC) (Chlamydophila caviae), this protein is 3-hydroxyacyl-[acyl-carrier-protein] dehydratase FabZ.